The chain runs to 209 residues: Segregation and condensation protein B (209 aa).

It belongs to the ScpB family. In terms of assembly, homodimer. Homodimerization may be required to stabilize the binding of ScpA to the Smc head domains. Component of a cohesin-like complex composed of ScpA, ScpB and the Smc homodimer, in which ScpA and ScpB bind to the head domain of Smc. The presence of the three proteins is required for the association of the complex with DNA.

The protein localises to the cytoplasm. Participates in chromosomal partition during cell division. May act via the formation of a condensin-like complex containing Smc and ScpA that pull DNA away from mid-cell into both cell halves. This is Segregation and condensation protein B from Geobacillus thermodenitrificans (strain NG80-2).